Here is a 696-residue protein sequence, read N- to C-terminus: Putative zinc metalloproteinase YIL108W (696 aa).

Lys-245 is covalently cross-linked (Glycyl lysine isopeptide (Lys-Gly) (interchain with G-Cter in ubiquitin)). His-318 is a Zn(2+) binding site. Residue Glu-319 is part of the active site. The Zn(2+) site is built by His-322 and His-328. The residue at position 361 (Ser-361) is a Phosphoserine. Glycyl lysine isopeptide (Lys-Gly) (interchain with G-Cter in ubiquitin) cross-links involve residues Lys-478, Lys-518, Lys-579, Lys-590, and Lys-596. One can recognise a Jacalin-type lectin domain in the interval 522 to 695 (GIKSPLYGRS…VDAFGIIYGA (174 aa)).

Belongs to the peptidase M10B family. It depends on Zn(2+) as a cofactor.

Its subcellular location is the cytoplasm. This Saccharomyces cerevisiae (strain ATCC 204508 / S288c) (Baker's yeast) protein is Putative zinc metalloproteinase YIL108W.